The following is a 302-amino-acid chain: Myb-related protein Hv33 (302 aa).

HTH myb-type domains lie at glutamine 11–leucine 63 and arginine 64–leucine 118. DNA-binding regions (H-T-H motif) lie at residues tryptophan 39–leucine 63 and tryptophan 91–isoleucine 114. The disordered stretch occupies residues alanine 137–valine 158.

In terms of tissue distribution, germinating seed and apical meristem of shoot and root.

The protein localises to the nucleus. Functionally, possible transcription activator in response to an external signal. May be involved in the regulation of flavonoid biosynthesis. The chain is Myb-related protein Hv33 (MYB2) from Hordeum vulgare (Barley).